Reading from the N-terminus, the 263-residue chain is Zinc import ATP-binding protein ZnuC (263 aa).

Residues 11 to 226 form the ABC transporter domain; the sequence is VELKNINVVF…PTFIHFFGDQ (216 aa). 43 to 50 provides a ligand contact to ATP; it reads GPNGGGKS.

Belongs to the ABC transporter superfamily. Zinc importer (TC 3.A.1.15.5) family. In terms of assembly, the complex is composed of two ATP-binding proteins (ZnuC), two transmembrane proteins (ZnuB) and a solute-binding protein (ZnuA).

It localises to the cell inner membrane. The enzyme catalyses Zn(2+)(out) + ATP(in) + H2O(in) = Zn(2+)(in) + ADP(in) + phosphate(in) + H(+)(in). Functionally, part of the ABC transporter complex ZnuABC involved in zinc import. Responsible for energy coupling to the transport system. The polypeptide is Zinc import ATP-binding protein ZnuC (Pasteurella multocida (strain Pm70)).